Reading from the N-terminus, the 207-residue chain is Methylated-DNA--protein-cysteine methyltransferase (207 aa).

Residues tyrosine 123 and arginine 137 each contribute to the DNA site. The active-site Nucleophile; methyl group acceptor is cysteine 154. Serine 160 is a DNA binding site.

Belongs to the MGMT family.

The protein resides in the nucleus. The enzyme catalyses a 6-O-methyl-2'-deoxyguanosine in DNA + L-cysteinyl-[protein] = S-methyl-L-cysteinyl-[protein] + a 2'-deoxyguanosine in DNA. The catalysed reaction is a 4-O-methyl-thymidine in DNA + L-cysteinyl-[protein] = a thymidine in DNA + S-methyl-L-cysteinyl-[protein]. Functionally, involved in the cellular defense against the biological effects of O6-methylguanine (O6-MeG) and O4-methylthymine (O4-MeT) in DNA. Repairs the methylated nucleobase in DNA by stoichiometrically transferring the methyl group to a cysteine residue in the enzyme. This is a suicide reaction: the enzyme is irreversibly inactivated. The polypeptide is Methylated-DNA--protein-cysteine methyltransferase (MGT1) (Candida glabrata (strain ATCC 2001 / BCRC 20586 / JCM 3761 / NBRC 0622 / NRRL Y-65 / CBS 138) (Yeast)).